A 45-amino-acid polypeptide reads, in one-letter code: MFDAFTLVVSQADTRGEMLSTAQIDALSQMVAESNKYLDAVNYIT.

The protein belongs to the phycobiliprotein family. As to quaternary structure, heterodimer of an alpha and a beta subunit. The hererodimer further assembles into trimers and the trimers into hexamers. Post-translationally, contains two covalently linked bilin chromophores.

It is found in the cellular thylakoid membrane. Functionally, light-harvesting photosynthetic bile pigment-protein from the phycobiliprotein complex (phycobilisome, PBS). Phycocyanin is the major phycobiliprotein in the PBS rod. The protein is C-phycocyanin beta subunit (cpcB) of Limnospira fusiformis (Arthrospira fusiformis).